The chain runs to 870 residues: Leucine--tRNA ligase (870 aa).

A 'HIGH' region motif is present at residues 43–53 (PYPSGRIHMGH). The 'KMSKS' region signature appears at 630–634 (KMSKS). Lys633 contributes to the ATP binding site.

This sequence belongs to the class-I aminoacyl-tRNA synthetase family.

The protein localises to the cytoplasm. It carries out the reaction tRNA(Leu) + L-leucine + ATP = L-leucyl-tRNA(Leu) + AMP + diphosphate. This is Leucine--tRNA ligase from Parvibaculum lavamentivorans (strain DS-1 / DSM 13023 / NCIMB 13966).